The primary structure comprises 4870 residues: MSRRSLINAAEQLLHPGPVGAGQVSGESANTIITFEKDIESLFVTQAEAANVGTAMAQALAEVGADDHNRLIKNLNLMSPTHLESIWQFNANVPGMWEECFHDVIERRAANRPHSLAVDAWDMKLTYADLVREARLLAAYLQHRGVRPGSVVPISFERSGAALVAMLAVSKAGGAFVSVPPTLPAGRLDAILEVIEAPFVVTWSKYEPFWAERLPTLPIDSYPKPSADATVKTLGKPEDLFYVIFTSGSTGRPKGCMLSHSNWLNGALRNAPSWKYGPESRVLQMLSHTFDMSLLEICTSLGSGACVCVPRTEEIETSVSDAINRWQVNHVIMTPSLARSLRRDDVPGLKTMCLGGEAFPREIVTMWSERINLWQFYGPSECSINSSSRPITRPDADPLNIGPPNSAACWVVDTQDYNKLVPVGAIGELLVSGPIVGMGYLKNPIKTAEAFLDEVGFVAKDDPQFGGFRFYRTGDLVRWNSDGTITFCGRADTQVKLNGQRLELAEVEYQLGLEAGVQYAIAMAPQSGRCKNNLIAVLTVKCGGASNQGNADDEIPLLDRHDPIVQQTVKKLRSQLQHALPRYMVPTIWAFVGRMPMSPSGKIDRVQLRNWVQEMSQETFDAITGRSFEAEDHVLGLSQLEQEIQLAWAEALGLSAAEVGLQQPFVALGGDSIKALDAVARCRARQIKISMVHILSCEGVREASSLAEVQETPAHQVAEIAVDYSDLWTRLSTEYDISKLGVTQVEEVEDVFPCTTMQEGMFLGQIRRPGAYHMRFFHRVQLKGGSLPTVERIQQAWASLVERHPSLRTVFVDDLSSEAIYHSVVLRSVPMELTMREVPRDLNPESALAMFTEELVPFRPNAPLHRMLLLTCRGRVPYLMLEISHVIMDGYALSVFRREFIRACSSTASLPRGPDYRMFANYHRTRQTDESAKYWTNYLADCVPCHIPTDPLSVPTDASPEWPRTLQRRDFGFDNSVAFLQRCKERQVTLACAIRAAWALVLRAYTQSRDVCFGYVSSGRNVPVPEVETIFGLCLSMQGLFNTAISMEWVPPTAEDEDALLDLEEIREQDDPTEYDIAISVDIHEGHIKLGFLYWPNLSDFQITHLAEALQGAMNCFAFQPDVALNTLTLLQASDLCSTLTNGPTLLPLEAVRGNVISMIDRWVTRQPESPAIDGWDGSLTYKQLHEQSSWVARNLLHQGVKLGDRILVCADRSSRTVVTILGVVRAGCVLVLSNPTDPEKRLQWLAHKCNATLVVVDPAYEERFATSGARVFSTTSVCAPAAWDYEFSALDDQDLVSILFTSGSTGTPKGILMDHGALATSVLLGHGRTLRFSRHTRMLHFASLTFDAALAEIFTTLAHGGCICVPCEEDRLSDVSGCISRFAVNTAMLTPSVGRLLDPEALPTLKALAMIGEPMSRLDVERFAPVLDLYNGAGPTETSIMVTIAGPMKPTDEPVNLGYAVAGVRLWVTEAENPNRLAPLGAVGELIVEGRLVTRGYLDDPARTRESFLPNLPWLPSQHALYRTGDLVRYAEDGSLRYMGRKDTQVKLRGQRIELQEVEYHLRKSLQQAQVVVEMVIPEGKIRAQASLVAFVSGLTAADVESSSARNFDQSMPMSQIALPGSTIQALEEALPRYMIPSVYFALDTIPLSVNGKADRRRLREIGAALLVSSTAHKNTVDGKSEPVKWTASSKLELTLLELWTTTLGLEAETIYGDDSFFELGGDSVSAMKLVATARDRFKLSLSVPQMFRHPTIHQLAAILGEATGQPESSASSTTEEGFTFSTPDDSSTNDGVDDDFLRLATAQLAQLAQEKGKKVDIAALLKQLQGGSSSCKTPSVSSSSSSSSSRKKKSAKVVSPVEAPAPVPVPFSLLDGGADVVEKIRAQAVEQCKILPGDIEDIYPATALQEGMMALMARTPGVYTTTLTCELPERVNLARLHSAWDKAAEAHPILRTRIILTENNTAVQVVQRAKELPWDAYSLQDGDPLPDLTSNMTLGSTLLRLAEIHRQNQPRMLLVAIHHALYDGWSMPLLKQAVEDVYHGQELWPQPFTPFINYLNEGKPAAQGYWTAHLDGFAGSVFPNLPSINHHIQPTERRTRSLAVPTAPPGSQYTMATKIQAAWAVTVSRYAEAEDIVFGTVSTGRSAPVPSIDRMVGPTITTVPVRISLGNQAERLTSLLQRVQEDGWNRMDHEHLGLQHIRRLGESAAAACNLQTLLVIQPREEPRAKSISTLLSGLQDVAELKGVDTYPLMLVCEPDGVSLHLTAVFDPAVLDAVMLDRMLAHWELVLNQIWSEPDMAVMGLDGVSYRDKQTLVRWNAGEKIADGCAHDAVYEWSVRTPHAPAVFAWDGKWTYEELEKCSSLIASQVLVHGVSSGDFVALYHEKSRWAAAAILAVFKAGGILVTLDPAHPKDRIKDILDQARPRLVLTSQSLLDEARELETPVMVVQFAASQPMPGECFPLPTVSPTQAAYAPFTSGSTGRPKGIPLEHRGLAASTASVARACLLRPASRVLHFASFAFDASMMEHLIAWHAGSCLCIPVETVRQTDLARCIRDFEVTWAFLTPSCLRLISPDDVQSLEALGLGGESMTPEDIFIWGPRLRQIVQLYGPAECSIVAALTEVTKPSENRLIGRPNACRCWVVDPHSPDRLAPLGAVGELVIEGITVGRGYIDDPERTTQAFIPPPTWIQTLYPNEQQPSRLYRTGDLVRYAGTDGKLTFIGRRDGQLKLHGQRIELADVEAHLRPLIPGTQKVVVEMVHSVGNHHPLLAAFVEEILTSQDQVEQVVNLLHPSQTQCALNVKAIDSALSQTVPQYMIPSMYLHISRLPLSASGKLNRRHLRRLVAEFPRQRLSEYAAGSGLAVPNRPATAQEREMQAIWARVLSVDPDTIGVNEDFFRIGGDSISGMQVATRCNAAGMHITSADLFQHRTIEQLMRHLSANGKTGSASISLPPEPVDEWVPLAPIQQLFFEIAPQGPDHFNQSLLLRTSRRVSAEKLAGGLDILVGRHSMLRARFCRDDSGQWSQQVRSRGPYPASAFYRLTTHNHIAPELLSSLLAASQMALSIQEGPLLAVDLVNLTDDTQLVYLVAHHLIIDLVSWRILHAELEEYLQTGSFASTTGSVPFLTWSRAQAEYSANHLTPTLPLPGFQEANDGFDASRYWGISCESNTFGQTSTSTFTLDQTVTDQLFGPANNVLDTRPAEILQAALWYSFTQSLTDRPGPSIYVEGHGREPWTGSIDLSGTVGWFTTMSPLVSAPWDSLSQTSMRDFLDALSYIKDQRRRIPANGWAYFTSRYLNDEGKVAYGRMKPVVEILFNYMGQYQEMNREDAILQLAGDGIQSGTGAADVADNVPRFSLIDVSAFISNGCLTFQFILPKSLQQDSRLQGCFQEYERTLVAAANSLSTEGPRKTLADFPLMPALTYDQLSQCLDHTLPSMGLCARDVVDIYPCSPVQQGMLLAQLRDRQAYQQRFRFQVKSRGSTDRLTLEKLKDAWTEVINRHDILRTLLLPVSDYSHLDQVVMAPGSLQHLVRINAMDTNPTQGLPHSINITSDSTGTVICEWNVSHALVDAMSIAVIQQEVNEALEGSLGQHQKTPRYADYIQWLSLQDNTETQAYWKKYLEGVEPCLFPKLASSTDKVNPEGTISAIRATWTRDSRLDKLCHTHGITLTNLFHIVWSLLLSAYLGTDKVCFGYTTLGRDVPVDGVEKMVGPLVNVIATTIQLQEDDSILDALLTHQTHLSNSLQHQHYALADVYASLGLVGSQLFNTIVSLQDISHFDANDERPTRVEMLPANDVSEYDVALNIGVDQSSIQVVCSYRTLSLSVEQADALLRTTSHVLDEILRDPKQPLRDLEVISPQCKEQLVKWNAAMPAPTDEYIHEKIQDQCRLHSSREAACAWDGIFTFAEVDDLSSRLAARLIRMGVTSGHIIPIYSPKSRWTVIAILGVLKTGAAFTLLETSHPTARLRVICNEIKADIIIAPASHAVPAATLAPILVVLDSITSMSPQESDLLPAVGMPPAAEALAYLIFTSGSTGNPKGVMVTHQNLCSNASIMTTSVNMTSDSRVLHFASHAFDACLWEIFGALFAGACLIIPSESETKEDLAGCIERMVVTWAFLTPSVARILKPEALPSLRNLVLGGEPIAASDLDMWRGHVQVVCAYGPTETAILASTTSPSTFPSDGKDIGVPTGSSLWIVDKQNYNKLAPHGATGELLIEGPNVSQGYLGDPEKTNEAFPVAPRWLSQLRKSPTRVYRTGDLVRFNTSTGTIHFVGRKDNQIKFHGQRIELGDIEHHAQQAFSNASMVIVDLITPEQPQQPYIVAFVHQADTRTGTADPIDTILLPPSESFRADAIGAQNHMHKRLPHYMVPTAFLPLHRLPLSGTGKADRKRLRQCALSLSSLELNAYRATASAKRMPFTAAECKMQELVATVLGRDMSEIGMDDSFFYLGGDSIQAMRLVSEGRQQGLTLSLQAIFDAPRLGDLAYRTANLVRVSEPAPPTLPATSSDDCDHKETIVAALPIKKTDVAEVLPTTSFQRTWLDSQLKSYIVVDIPGPIDLARLRTAIQRVVKAHPILRASFVPYETTTMQVILRTAVVITEADLSTTTVEGICRKDANAPMAPGTPYLRVILATQGEVDRKLIMRLSHAQYDGISLSLLMNDLSHAYASESRPLPSSHLPAFNDYITYQQTQGADPTATTFWHRLLKDVPITYLDLQPAETPTSNGSLITRTRDINIAAFPSLPNGITTATAVKAAWSLVLAQKTGSLAVIFGQVVHGRGIALTGVEGIVGPCANITPVVARLGPQTTRMELMQTLQDQHRSAMPYETAGRKELQTIVQHQNNVMADDMELSLGEARWGKTGYVGGEDHVVDVGVE.

Residues 106 to 497 (ERRAANRPHS…CGRADTQVKL (392 aa)) are adenylation 1. One can recognise a Carrier 1 domain in the interval 635–711 (LGLSQLEQEI…EASSLAEVQE (77 aa)). Ser672 bears the O-(pantetheine 4'-phosphoryl)serine mark. A condensation 1 region spans residues 749 to 1133 (EDVFPCTTMQ…ALNTLTLLQA (385 aa)). Positions 1161–1550 (DRWVTRQPES…GRKDTQVKLR (390 aa)) are adenylation 2. A Carrier 2 domain is found at 1688–1765 (TASSKLELTL…QLAAILGEAT (78 aa)). An O-(pantetheine 4'-phosphoryl)serine modification is found at Ser1725. Disordered regions lie at residues 1764–1794 (ATGQPESSASSTTEEGFTFSTPDDSSTNDGV) and 1829–1859 (GSSSCKTPSVSSSSSSSSSRKKKSAKVVSPV). 2 stretches are compositionally biased toward low complexity: residues 1769 to 1792 (ESSASSTTEEGFTFSTPDDSSTND) and 1830 to 1846 (SSSCKTPSVSSSSSSSS). The tract at residues 1898–2313 (EDIYPATALQ…GVSYRDKQTL (416 aa)) is condensation 2. The segment at 2336-2728 (VRTPHAPAVF…IGRRDGQLKL (393 aa)) is adenylation 3. The Carrier 3 domain occupies 2864–2940 (RPATAQEREM…QLMRHLSANG (77 aa)). An O-(pantetheine 4'-phosphoryl)serine modification is found at Ser2901. Condensation regions lie at residues 2957–3422 (WVPL…TYDQ) and 3443–3862 (DIYP…EQLV). An adenylation 4 region spans residues 3887–4277 (HSSREAACAW…VGRKDNQIKF (391 aa)). In terms of domain architecture, Carrier 4 spans 4411–4487 (MPFTAAECKM…DLAYRTANLV (77 aa)). Ser4448 carries the post-translational modification O-(pantetheine 4'-phosphoryl)serine. The segment at 4524–4837 (EVLPTTSFQR…LQTIVQHQNN (314 aa)) is condensation 5.

This sequence belongs to the NRP synthetase family.

It participates in secondary metabolite biosynthesis. Functionally, nonribosomal peptide synthetase; part of the gene cluster that mediates the biosynthesis of malformins, cyclic pentapeptides with a disulfide bond between 2 consecutive cysteins, that show potential anti-tumor as well as antimalarial and antitrypanosomal properties. The nonribosomal peptide synthetase mlfA is responsible of the formation of the cyclic pentapeptide. The malformin biosynthesis clusters in malformin-producing fungi also contain enzymes involved in the formation of the disulfide bond between the two consecutive cysteins within malformins, in addition to additional tailoring enzymes such as methyltransferases or oxidoreductases. They are also composed of up to 4 major facilitator superfamily transporters, and transcription factors probably involved in the regulation of the expression of those clusters. The chain is Malformin synthetase mlfA from Aspergillus niger (strain ATCC 1015 / CBS 113.46 / FGSC A1144 / LSHB Ac4 / NCTC 3858a / NRRL 328 / USDA 3528.7).